Reading from the N-terminus, the 513-residue chain is 2,3-bisphosphoglycerate-independent phosphoglycerate mutase (513 aa).

Residues D13 and S63 each coordinate Mn(2+). Catalysis depends on S63, which acts as the Phosphoserine intermediate. Residues H124, 154-155, R186, R192, 262-265, and K335 contribute to the substrate site; these read RD and RADR. D402, H406, D443, H444, and H462 together coordinate Mn(2+).

This sequence belongs to the BPG-independent phosphoglycerate mutase family. In terms of assembly, monomer. The cofactor is Mn(2+).

The enzyme catalyses (2R)-2-phosphoglycerate = (2R)-3-phosphoglycerate. It participates in carbohydrate degradation; glycolysis; pyruvate from D-glyceraldehyde 3-phosphate: step 3/5. Functionally, catalyzes the interconversion of 2-phosphoglycerate and 3-phosphoglycerate. The sequence is that of 2,3-bisphosphoglycerate-independent phosphoglycerate mutase from Photobacterium profundum (strain SS9).